The primary structure comprises 303 residues: 4-diphosphocytidyl-2-C-methyl-D-erythritol kinase (303 aa).

K24 is an active-site residue. 111–121 contributes to the ATP binding site; the sequence is PIASGIGGGSA. D153 is a catalytic residue.

The protein belongs to the GHMP kinase family. IspE subfamily.

The enzyme catalyses 4-CDP-2-C-methyl-D-erythritol + ATP = 4-CDP-2-C-methyl-D-erythritol 2-phosphate + ADP + H(+). Its pathway is isoprenoid biosynthesis; isopentenyl diphosphate biosynthesis via DXP pathway; isopentenyl diphosphate from 1-deoxy-D-xylulose 5-phosphate: step 3/6. Functionally, catalyzes the phosphorylation of the position 2 hydroxy group of 4-diphosphocytidyl-2C-methyl-D-erythritol. The chain is 4-diphosphocytidyl-2-C-methyl-D-erythritol kinase from Rhizobium johnstonii (strain DSM 114642 / LMG 32736 / 3841) (Rhizobium leguminosarum bv. viciae).